The chain runs to 760 residues: Rho GTPase-activating protein 26 (760 aa).

Positions 7-262 (EFSECCLDSP…MKENPHEHKN (256 aa)) constitute a BAR domain. The region spanning 265–369 (PYTMEGYLYV…WMEAMDGREP (105 aa)) is the PH domain. Positions 383–568 (AQLDSIGFSI…ILIENHEKIF (186 aa)) constitute a Rho-GAP domain. 2 disordered regions span residues 571 to 617 (VPET…ESRN) and 658 to 701 (PNRP…SPIS). The span at 605 to 617 (HTAQPNEKQESRN) shows a compositional bias: polar residues. A compositionally biased stretch (low complexity) spans 674–701 (LSPSWPMFSAPSSPMPTSSTSSDSSPIS). In terms of domain architecture, SH3 spans 702–760 (SPLRKARALYACKAEHDSELSFTAGTVFDNVHPSQEPGWLEGTLNGKTGLIPENYVEFL).

In terms of assembly, binds to the C-terminus of PTK2/FAK1. In terms of tissue distribution, detected in embryonic brain and liver, and at low levels in embryonic eye, heart, lung, intestine and skeletal muscle.

It is found in the cell junction. It localises to the focal adhesion. The protein resides in the cytoplasm. The protein localises to the cytoskeleton. Its subcellular location is the endosome membrane. In terms of biological role, GTPase-activating protein for RHOA and CDC42. May be involved in the regulation of neosynthesized protein export through a Rab-endososomal dependent export route. The sequence is that of Rho GTPase-activating protein 26 (ARHGAP26) from Gallus gallus (Chicken).